A 655-amino-acid polypeptide reads, in one-letter code: WD repeat-containing protein 70 (655 aa).

2 disordered regions span residues M1–T24 and F43–R170. The span at Q45–E78 shows a compositional bias: basic and acidic residues. Residues R99–S112 show a composition bias toward low complexity. Positions E148–D165 are enriched in acidic residues. WD repeat units follow at residues H181–K220, C228–K269, G282–S322, G331–F370, A377–F416, P422–E467, and I470–A509. K297 is covalently cross-linked (Glycyl lysine isopeptide (Lys-Gly) (interchain with G-Cter in SUMO2)). An N6-acetyllysine modification is found at K453. Residues R541–E566 are compositionally biased toward basic and acidic residues. Positions R541 to G582 are disordered. Residues P572–G582 are compositionally biased toward gly residues. A Phosphothreonine modification is found at T580. Residues K591 and K597 each participate in a glycyl lysine isopeptide (Lys-Gly) (interchain with G-Cter in SUMO2) cross-link. A phosphoserine mark is found at S622 and S639. Residues T632–I655 are disordered. Over residues K645–I655 the composition is skewed to basic and acidic residues.

It belongs to the WD repeat GAD-1 family.

The sequence is that of WD repeat-containing protein 70 (Wdr70) from Rattus norvegicus (Rat).